A 446-amino-acid chain; its full sequence is Nuclear distribution protein PAC1-1 (446 aa).

One can recognise a LisH domain in the interval 9–41 (QAEELHKSLIAYLSSINASQSVTTLREELQIGD). Residues 60–86 (ISVVRLQKRILDLESKIASLQAELDSA) are a coiled coil. WD repeat units lie at residues 112-153 (SHRG…RTLK), 155-195 (HTRT…ANIR), 199-239 (GHDH…CVKT), 242-281 (TQGD…ARAS), 284-344 (GHEN…IKTL), 346-385 (GHNN…KLVK), 390-430 (AHEH…TGFR), and 432-446 (VIAT…RVFM).

Belongs to the WD repeat LIS1/nudF family. Self-associates. Interacts with NDL1 and dynein.

Its subcellular location is the cytoplasm. It is found in the cytoskeleton. It localises to the spindle pole. Functionally, positively regulates the activity of the minus-end directed microtubule motor protein dynein. May enhance dynein-mediated microtubule sliding by targeting dynein to the microtubule plus end. Required for nuclear migration during vegetative growth as well as development. Required for retrograde early endosome (EE) transport from the hyphal tip. Required for localization of dynein to the mitotic spindle poles. Recruits additional proteins to the dynein complex at SPBs. This Uncinocarpus reesii (strain UAMH 1704) protein is Nuclear distribution protein PAC1-1.